Consider the following 30-residue polypeptide: Cycloviolacin-O5 (30 aa).

Positions 1 to 30 form a cross-link, cyclopeptide (Gly-Asn); it reads GTPCGESCVWIPCISSAVGCSCKNKVCYKN. Cystine bridges form between Cys-4–Cys-20, Cys-8–Cys-22, and Cys-13–Cys-27.

In terms of processing, this is a cyclic peptide.

Functionally, probably participates in a plant defense mechanism. This is Cycloviolacin-O5 from Viola odorata (Sweet violet).